The primary structure comprises 896 residues: Histone-lysine N-methyltransferase CLF (896 aa).

Disordered stretches follow at residues 344–419 and 459–514; these read DNLK…NRRI and SGIK…DGCD. The segment covering 358-390 has biased composition (low complexity); sequence GSSGQKTKSQQSESSSTARVSSESSESEVQLLS. Polar residues-rich tracts occupy residues 391-400, 465-476, and 485-498; these read NKSPQHSPGL, VVSSQCNSPSTR, and QMENNSSFVDAQSD. Positions 504–514 are enriched in basic and acidic residues; the sequence is NNEHSATDGCD. The 100-residue stretch at 633-732 folds into the CXC domain; sequence RKRITERKDQ…TLGVPNQRGD (100 aa). In terms of domain architecture, SET spans 747-862; sequence QRVLLGRSDV…AGEELFYDYR (116 aa). Tyr861 contributes to the S-adenosyl-L-methionine binding site. Positions 869-884 are enriched in basic and acidic residues; the sequence is PAWARKPEGPGAKDDA. The interval 869–896 is disordered; it reads PAWARKPEGPGAKDDAQPSTGRAKKLAH.

The protein belongs to the class V-like SAM-binding methyltransferase superfamily. Histone-lysine methyltransferase family. EZ subfamily. As to quaternary structure, interacts with FIE1. Component of the polycomb repressive complex 2 (PRC2), composed of the core PRC2 components FIE2, EMF2B and EZ1. PRC2 methylates 'Lys-27' residues of histone H3 (H3K27me3), leading to transcriptional repression of the affected target gene. As to expression, widely expressed. Highly expressed in young panicle.

The catalysed reaction is L-lysyl(27)-[histone H3] + 3 S-adenosyl-L-methionine = N(6),N(6),N(6)-trimethyl-L-lysyl(27)-[histone H3] + 3 S-adenosyl-L-homocysteine + 3 H(+). In terms of biological role, polycomb group (PcG) protein. Catalytic subunit of some PcG multiprotein complex, which methylates 'Lys-27' of histone H3, leading to transcriptional repression of the affected target genes. PcG proteins act by forming multiprotein complexes, which are required to maintain the transcriptionally repressive state of homeotic genes throughout development. PcG proteins are not required to initiate repression, but to maintain it during later stages of development. Involved in the regulation of flowering. Represses flowering under long day (LD) conditions. Regulates the trimethylation on histone H3 'Lys-27' (H3K27me3) of the flowering regulators MADS14, MADS15, RFT1, EHD1, HD3A and LF. The sequence is that of Histone-lysine N-methyltransferase CLF from Oryza sativa subsp. japonica (Rice).